Here is a 223-residue protein sequence, read N- to C-terminus: Ethylene-inducing xylanase (223 aa).

The first 19 residues, 1 to 19, serve as a signal peptide directing secretion; it reads MVSFTTLLAGFVAVTGVLS. The region spanning 34–223 is the GH11 domain; it reads QTIGPGTGFN…SSGNANINVS (190 aa). A glycan (N-linked (GlcNAc...) asparagine) is linked at asparagine 94. The Nucleophile role is filled by glutamate 119. Glutamate 210 (proton donor) is an active-site residue.

Belongs to the glycosyl hydrolase 11 (cellulase G) family. In terms of assembly, interactc with tomato LeEix2 receptor to trigger its internalization.

Its subcellular location is the secreted. It carries out the reaction Endohydrolysis of (1-&gt;4)-beta-D-xylosidic linkages in xylans.. Its pathway is glycan degradation; xylan degradation. Endo-1,4-beta-xylanase involved in the hydrolysis of xylan, a major structural heterogeneous polysaccharide found in plant biomass representing the second most abundant polysaccharide in the biosphere, after cellulose. Acts as an elicitor of plant defense responses in hosts such as tobacco (Nicotiana tabacum) or tomato (Solanum lycopersicum). Induces the production of ethylene and leads alterations in membrane function with rapid efflux of potassium, uptake of calcium, alkalization of the medium, increased leakage of cellular components and necrosis in plant hosts. EIX is translocated through the xylem of the host plant to the leaf mesophyll, leading to host response to pathogen-derived extracellular proteins in tissues distant from the invading pathogen. Greatly enhances the expression of two calcineurin B-like proteins-interacting protein kinases (CIPKs) family members, OsCIPK14 and OsCIPK15, in rice cultured cells. In tomato, triggers the defense response via binding to and subsequent internalization of the LeEix2 receptor. This chain is Ethylene-inducing xylanase, found in Hypocrea rufa (Trichoderma viride).